Reading from the N-terminus, the 1034-residue chain is Beta-galactosidase (1034 aa).

The Proton donor role is filled by Glu-481. Catalysis depends on Glu-547, which acts as the Nucleophile.

The protein belongs to the glycosyl hydrolase 2 family.

It catalyses the reaction Hydrolysis of terminal non-reducing beta-D-galactose residues in beta-D-galactosides.. This is Beta-galactosidase (bgaM) from Priestia megaterium (strain DSM 319 / IMG 1521) (Bacillus megaterium).